Reading from the N-terminus, the 424-residue chain is ATP-sensitive inward rectifier potassium channel 8 (424 aa).

Residues 1–69 (MLARKSIIPE…IFTTLVDLKW (69 aa)) lie on the Cytoplasmic side of the membrane. The residue at position 6 (serine 6) is a Phosphoserine. Residues 70-94 (RHTLVIFTMSFLCSWLLFAIMWWLV) traverse the membrane as a helical segment. Topologically, residues 95-126 (AFAHGDIYAYMEKSGMEKSGLESTVCVTNVRS) are extracellular. Positions 127-138 (FTSAFLFSIEVQ) form an intramembrane region, helical; Pore-forming. An intramembrane region (pore-forming) is located at residues 139–145 (VTIGFGG). Positions 140–145 (TIGFGG) match the Selectivity filter motif. Topologically, residues 146 to 154 (RMMTEECPL) are extracellular. A helical membrane pass occupies residues 155–176 (AITVLILQNIVGLIINAVMLGC). Residues 177 to 424 (IFMKTAQAHR…PEGNQNTSES (248 aa)) lie on the Cytoplasmic side of the membrane. Positions 375-424 (SHQNSLRKRNSMRRNNSMRRNNSIRRNNSSLMVPKVQFMTPEGNQNTSES) are disordered. The span at 387–404 (RRNNSMRRNNSIRRNNSS) shows a compositional bias: low complexity.

The protein belongs to the inward rectifier-type potassium channel (TC 1.A.2.1) family. KCNJ8 subfamily. In terms of assembly, interacts with ABCC9. Predominantly detected in fetal and adult heart.

It is found in the membrane. It catalyses the reaction K(+)(in) = K(+)(out). Inward rectifier potassium channels are characterized by a greater tendency to allow potassium to flow into the cell rather than out of it. Their voltage dependence is regulated by the concentration of extracellular potassium; as external potassium is raised, the voltage range of the channel opening shifts to more positive voltages. The inward rectification is mainly due to the blockage of outward current by internal magnesium. This channel is activated by internal ATP and can be blocked by external barium. Can form a sulfonylurea-sensitive but ATP-insensitive potassium channel with ABCC9. This is ATP-sensitive inward rectifier potassium channel 8 (KCNJ8) from Homo sapiens (Human).